We begin with the raw amino-acid sequence, 444 residues long: Probable D-serine dehydratase (444 aa).

Lys110 carries the post-translational modification N6-(pyridoxal phosphate)lysine.

The protein belongs to the serine/threonine dehydratase family. DsdA subfamily. Pyridoxal 5'-phosphate is required as a cofactor.

The catalysed reaction is D-serine = pyruvate + NH4(+). This is Probable D-serine dehydratase from Burkholderia thailandensis (strain ATCC 700388 / DSM 13276 / CCUG 48851 / CIP 106301 / E264).